The primary structure comprises 423 residues: Nucleoporin NUP42 (423 aa).

A C3H1-type zinc finger spans residues 1–25; it reads MAICQFFLQGRCRFGDRCWNEHPGA. The stretch at 14 to 15 is one FG 1 repeat; that stretch reads FG. The tract at residues 24-85 is disordered; that stretch reads GARGAGGGRQ…EKPYFSSFDS (62 aa). Over residues 40–69 the composition is skewed to polar residues; it reads SGNNRRGWNTTSQRYSNVIQPSSFSKSTPW. The interval 94 to 170 is interaction with HIV-1 Vpr; sequence GFGLSENPFA…EYHNFLTSNN (77 aa). An FG 2 repeat occupies 95–96; sequence FG. A Phosphoserine modification is found at Ser106. FG repeat units lie at residues 218 to 219, 220 to 221, 265 to 266, 271 to 272, 288 to 289, 290 to 291, 311 to 312, 336 to 337, 345 to 346, and 364 to 365; these read FG. Residues 365 to 423 are interaction with GLE1; it reads GNSSISTSLSASSSIIATDNVLFTPRDKLTVEELEQFQSKKFTLGKIPLKPPPLELLNV.

As to quaternary structure, probable component of the nuclear pore complex (NPC). Interacts with nuclear export protein NXF1. Interacts with GLE1. Able to form a heterotrimer with NUP155 and GLE1 in vitro. Interacts with XPO1. (Microbial infection) Interacts with the HIV-1 virus proteins Rev and Vpr. The interaction with HIV-1 Rev, a protein that mediates nuclear export of unspliced viral RNAs, suggests that its function may be bypassed by the HIV-1 virus. In terms of processing, O-glycosylated. As to expression, ubiquitously expressed.

Its subcellular location is the nucleus. It localises to the nuclear pore complex. The protein resides in the nucleus membrane. Its function is as follows. Required for the export of mRNAs containing poly(A) tails from the nucleus into the cytoplasm. (Microbial infection) In case of infection by HIV-1, it may participate in the docking of viral Vpr at the nuclear envelope. In Homo sapiens (Human), this protein is Nucleoporin NUP42.